The chain runs to 509 residues: AAA ATPase forming ring-shaped complexes (509 aa).

Residues 11–50 adopt a coiled-coil conformation; that stretch reads AHLQRTISNLSARNAKLAELLKASRDKLSILQDQLEDLAA. 236–241 contributes to the ATP binding site; sequence GCGKTL.

This sequence belongs to the AAA ATPase family. Homohexamer. Assembles into a hexameric ring structure.

In Corynebacterium diphtheriae (strain ATCC 700971 / NCTC 13129 / Biotype gravis), this protein is AAA ATPase forming ring-shaped complexes.